The following is a 240-amino-acid chain: 1-(5-phosphoribosyl)-5-[(5-phosphoribosylamino)methylideneamino] imidazole-4-carboxamide isomerase (240 aa).

The active-site Proton acceptor is the Asp-8. Asp-129 serves as the catalytic Proton donor.

This sequence belongs to the HisA/HisF family.

Its subcellular location is the cytoplasm. The catalysed reaction is 1-(5-phospho-beta-D-ribosyl)-5-[(5-phospho-beta-D-ribosylamino)methylideneamino]imidazole-4-carboxamide = 5-[(5-phospho-1-deoxy-D-ribulos-1-ylimino)methylamino]-1-(5-phospho-beta-D-ribosyl)imidazole-4-carboxamide. Its pathway is amino-acid biosynthesis; L-histidine biosynthesis; L-histidine from 5-phospho-alpha-D-ribose 1-diphosphate: step 4/9. This is 1-(5-phosphoribosyl)-5-[(5-phosphoribosylamino)methylideneamino] imidazole-4-carboxamide isomerase from Listeria monocytogenes serotype 4b (strain F2365).